The following is a 475-amino-acid chain: UDP-N-acetylmuramate--L-alanine ligase (475 aa).

Position 114-120 (G114–T120) interacts with ATP.

It belongs to the MurCDEF family.

The protein resides in the cytoplasm. The enzyme catalyses UDP-N-acetyl-alpha-D-muramate + L-alanine + ATP = UDP-N-acetyl-alpha-D-muramoyl-L-alanine + ADP + phosphate + H(+). The protein operates within cell wall biogenesis; peptidoglycan biosynthesis. Cell wall formation. The protein is UDP-N-acetylmuramate--L-alanine ligase of Bartonella quintana (strain Toulouse) (Rochalimaea quintana).